The chain runs to 115 residues: NADH-ubiquinone oxidoreductase chain 3 (115 aa).

3 helical membrane-spanning segments follow: residues 3-23 (FVLALTINTLLALLLMILTFW), 55-75 (FFLVAITFLLFDLEIALLLPL), and 84-104 (LPLMTTSSLMLIIILALGLTY).

Belongs to the complex I subunit 3 family. Core subunit of respiratory chain NADH dehydrogenase (Complex I) which is composed of 45 different subunits. Interacts with TMEM186. Interacts with TMEM242.

Its subcellular location is the mitochondrion inner membrane. It carries out the reaction a ubiquinone + NADH + 5 H(+)(in) = a ubiquinol + NAD(+) + 4 H(+)(out). Core subunit of the mitochondrial membrane respiratory chain NADH dehydrogenase (Complex I) which catalyzes electron transfer from NADH through the respiratory chain, using ubiquinone as an electron acceptor. Essential for the catalytic activity of complex I. This is NADH-ubiquinone oxidoreductase chain 3 from Pongo pygmaeus (Bornean orangutan).